The following is a 250-amino-acid chain: Protein BTG4 (250 aa).

Belongs to the BTG family. In terms of assembly, interacts with CNOT7 and EIF4E. Interacts with CNOT8. Expressed in oocytes. Expressed in testis and in olfactory epithelium.

Functionally, adapter protein that bridges CNOT7, a catalytic subunit of the CCR4-NOT complex, to EIF4E, and facilitates maternal mRNAs decay during the maturation of oocytes and in the fertilized egg. It is therefore required for the maternal-zygotic transition (MZT), zygotic cleavage and initiation of embryonic development. This Mus musculus (Mouse) protein is Protein BTG4 (Btg4).